The following is a 502-amino-acid chain: Aspartyl/glutamyl-tRNA(Asn/Gln) amidotransferase subunit B (502 aa).

The disordered stretch occupies residues 272 to 293; sequence TRHWHEDTRSTTSGRPKSDADD.

It belongs to the GatB/GatE family. GatB subfamily. In terms of assembly, heterotrimer of A, B and C subunits.

The catalysed reaction is L-glutamyl-tRNA(Gln) + L-glutamine + ATP + H2O = L-glutaminyl-tRNA(Gln) + L-glutamate + ADP + phosphate + H(+). It catalyses the reaction L-aspartyl-tRNA(Asn) + L-glutamine + ATP + H2O = L-asparaginyl-tRNA(Asn) + L-glutamate + ADP + phosphate + 2 H(+). Functionally, allows the formation of correctly charged Asn-tRNA(Asn) or Gln-tRNA(Gln) through the transamidation of misacylated Asp-tRNA(Asn) or Glu-tRNA(Gln) in organisms which lack either or both of asparaginyl-tRNA or glutaminyl-tRNA synthetases. The reaction takes place in the presence of glutamine and ATP through an activated phospho-Asp-tRNA(Asn) or phospho-Glu-tRNA(Gln). The chain is Aspartyl/glutamyl-tRNA(Asn/Gln) amidotransferase subunit B from Paenarthrobacter aurescens (strain TC1).